The following is a 658-amino-acid chain: Carnitine O-palmitoyltransferase 2, mitochondrial (658 aa).

The N-terminal 25 residues, 1–25 (MMPRLLFRAWPRCPSLVLGAPSRPL), are a transit peptide targeting the mitochondrion. At 26–178 (SAVSGPDDYL…GLLEPEVFHL (153 aa)) the chain is on the mitochondrial matrix side. An N6-succinyllysine mark is found at Lys-69 and Lys-85. The note=Mitochondrial inner membrane intramembrane region spans 179–208 (NPSKSDTDAFKRLIRFVPPSLSWYGAYLVN). Residues 209–658 (AYPLDMSQYF…DALEGKAIKT (450 aa)) are Mitochondrial matrix-facing. Lys-239 bears the N6-acetyllysine; alternate mark. The residue at position 239 (Lys-239) is an N6-succinyllysine; alternate. Position 305 is an N6-acetyllysine (Lys-305). Residue His-372 is the Proton acceptor of the active site. 2 positions are modified to N6-succinyllysine: Lys-424 and Lys-439. A CoA-binding site is contributed by 452 to 464 (GKEFLKKKQLSPD). The (R)-carnitine site is built by Tyr-486, Ser-488, and Thr-499. N6-acetyllysine; alternate occurs at positions 510 and 544. Lys-510 and Lys-544 each carry N6-succinyllysine; alternate.

The protein belongs to the carnitine/choline acetyltransferase family.

It is found in the mitochondrion inner membrane. The catalysed reaction is (R)-carnitine + hexadecanoyl-CoA = O-hexadecanoyl-(R)-carnitine + CoA. The enzyme catalyses octanoyl-CoA + (R)-carnitine = O-octanoyl-(R)-carnitine + CoA. It catalyses the reaction decanoyl-CoA + (R)-carnitine = O-decanoyl-(R)-carnitine + CoA. It carries out the reaction dodecanoyl-CoA + (R)-carnitine = O-dodecanoyl-R-carnitine + CoA. The catalysed reaction is tetradecanoyl-CoA + (R)-carnitine = O-tetradecanoyl-(R)-carnitine + CoA. The enzyme catalyses (R)-carnitine + octadecanoyl-CoA = O-octadecanoyl-(R)-carnitine + CoA. It catalyses the reaction eicosanoyl-CoA + (R)-carnitine = O-eicosanoyl-(R)-carnitine + CoA. It carries out the reaction (9Z)-tetradecenoyl-CoA + (R)-carnitine = O-(9Z)-tetradecenoyl-(R)-carnitine + CoA. The catalysed reaction is (5Z)-tetradecenoyl-CoA + (R)-carnitine = O-(5Z)-tetradecenoyl-(R)-carnitine + CoA. The enzyme catalyses (R)-carnitine + (9Z)-octadecenoyl-CoA = O-(9Z)-octadecenoyl-(R)-carnitine + CoA. It catalyses the reaction 4,8-dimethylnonanoyl-CoA + (R)-carnitine = O-4,8-dimethylnonanoyl-(R)-carnitine + CoA. The protein operates within lipid metabolism; fatty acid beta-oxidation. In terms of biological role, involved in the intramitochondrial synthesis of acylcarnitines from accumulated acyl-CoA metabolites. Reconverts acylcarnitines back into the respective acyl-CoA esters that can then undergo beta-oxidation, an essential step for the mitochondrial uptake of long-chain fatty acids and their subsequent beta-oxidation in the mitochondrion. Active with medium (C8-C12) and long-chain (C14-C18) acyl-CoA esters. This is Carnitine O-palmitoyltransferase 2, mitochondrial from Rattus norvegicus (Rat).